The sequence spans 153 residues: DNA gyrase inhibitor (153 aa).

It belongs to the DNA gyrase inhibitor family. In terms of assembly, interacts with DNA gyrase.

It is found in the cytoplasm. Inhibits the supercoiling activity of DNA gyrase. Acts by inhibiting DNA gyrase at an early step, prior to (or at the step of) binding of DNA by the gyrase. It protects cells against toxins that target DNA gyrase, by inhibiting activity of these toxins and reducing the formation of lethal double-strand breaks in the cell. The sequence is that of DNA gyrase inhibitor from Pantoea sp. (strain At-9b).